The following is a 366-amino-acid chain: RNA 3'-terminal phosphate cyclase (366 aa).

6 residues coordinate ATP: Q104, P131, Y294, D297, Q298, and H320. H320 serves as the catalytic Tele-AMP-histidine intermediate.

The protein belongs to the RNA 3'-terminal cyclase family. Type 1 subfamily.

It is found in the nucleus. It localises to the nucleoplasm. It catalyses the reaction a 3'-end 3'-phospho-ribonucleotide-RNA + ATP = a 3'-end 2',3'-cyclophospho-ribonucleotide-RNA + AMP + diphosphate. In terms of biological role, catalyzes the conversion of 3'-phosphate to a 2',3'-cyclic phosphodiester at the end of RNA. The mechanism of action of the enzyme occurs in 3 steps: (A) adenylation of the enzyme by ATP; (B) transfer of adenylate to an RNA-N3'P to produce RNA-N3'PP5'A; (C) and attack of the adjacent 2'-hydroxyl on the 3'-phosphorus in the diester linkage to produce the cyclic end product. Likely functions in some aspects of cellular RNA processing. Function plays an important role in regulating axon regeneration by inhibiting central nervous system (CNS) axon regeneration following optic nerve injury. This chain is RNA 3'-terminal phosphate cyclase (RTCA), found in Bos taurus (Bovine).